The chain runs to 368 residues: UDP-N-acetylglucosamine--N-acetylmuramyl-(pentapeptide) pyrophosphoryl-undecaprenol N-acetylglucosamine transferase (368 aa).

UDP-N-acetyl-alpha-D-glucosamine is bound by residues 11 to 13 (TGG), asparagine 123, arginine 164, serine 188, isoleucine 250, and glutamine 295.

The protein belongs to the glycosyltransferase 28 family. MurG subfamily.

Its subcellular location is the cell inner membrane. The enzyme catalyses di-trans,octa-cis-undecaprenyl diphospho-N-acetyl-alpha-D-muramoyl-L-alanyl-D-glutamyl-meso-2,6-diaminopimeloyl-D-alanyl-D-alanine + UDP-N-acetyl-alpha-D-glucosamine = di-trans,octa-cis-undecaprenyl diphospho-[N-acetyl-alpha-D-glucosaminyl-(1-&gt;4)]-N-acetyl-alpha-D-muramoyl-L-alanyl-D-glutamyl-meso-2,6-diaminopimeloyl-D-alanyl-D-alanine + UDP + H(+). It functions in the pathway cell wall biogenesis; peptidoglycan biosynthesis. Its function is as follows. Cell wall formation. Catalyzes the transfer of a GlcNAc subunit on undecaprenyl-pyrophosphoryl-MurNAc-pentapeptide (lipid intermediate I) to form undecaprenyl-pyrophosphoryl-MurNAc-(pentapeptide)GlcNAc (lipid intermediate II). This chain is UDP-N-acetylglucosamine--N-acetylmuramyl-(pentapeptide) pyrophosphoryl-undecaprenol N-acetylglucosamine transferase, found in Solidesulfovibrio magneticus (strain ATCC 700980 / DSM 13731 / RS-1) (Desulfovibrio magneticus).